We begin with the raw amino-acid sequence, 519 residues long: Cilia- and flagella-associated protein 157 (519 aa).

A compositionally biased stretch (basic residues) spans 1-11 (MPPKKKGKRGP). The interval 1-25 (MPPKKKGKRGPSAKTKEKETVRVAS) is disordered. Coiled coils occupy residues 28-185 (VTEQ…EKKV) and 241-356 (IELI…QRTL).

It belongs to the CFAP157 family.

The protein localises to the cytoplasm. Its subcellular location is the cytoskeleton. The protein resides in the cilium basal body. Functionally, specifically required during spermatogenesis for flagellum morphogenesis and sperm motility. In Xenopus tropicalis (Western clawed frog), this protein is Cilia- and flagella-associated protein 157.